The chain runs to 516 residues: Maturase K (516 aa).

This sequence belongs to the intron maturase 2 family. MatK subfamily.

Its subcellular location is the plastid. The protein resides in the chloroplast. In terms of biological role, usually encoded in the trnK tRNA gene intron. Probably assists in splicing its own and other chloroplast group II introns. The polypeptide is Maturase K (Galanthus nivalis (Common snowdrop)).